Here is a 248-residue protein sequence, read N- to C-terminus: 1-(5-phosphoribosyl)-5-[(5-phosphoribosylamino)methylideneamino] imidazole-4-carboxamide isomerase (248 aa).

Residue Asp-8 is the Proton acceptor of the active site. Asp-131 serves as the catalytic Proton donor.

The protein belongs to the HisA/HisF family.

It is found in the cytoplasm. It catalyses the reaction 1-(5-phospho-beta-D-ribosyl)-5-[(5-phospho-beta-D-ribosylamino)methylideneamino]imidazole-4-carboxamide = 5-[(5-phospho-1-deoxy-D-ribulos-1-ylimino)methylamino]-1-(5-phospho-beta-D-ribosyl)imidazole-4-carboxamide. Its pathway is amino-acid biosynthesis; L-histidine biosynthesis; L-histidine from 5-phospho-alpha-D-ribose 1-diphosphate: step 4/9. The protein is 1-(5-phosphoribosyl)-5-[(5-phosphoribosylamino)methylideneamino] imidazole-4-carboxamide isomerase of Paracidovorax citrulli (strain AAC00-1) (Acidovorax citrulli).